Here is a 342-residue protein sequence, read N- to C-terminus: Delta(6)-protoilludene synthase (342 aa).

Mg(2+) contacts are provided by Asp81, Asn217, Ser221, and Glu225. The short motif at 81-85 (DEYSD) is the DDXXD motif element. 2 residues coordinate (2E,6E)-farnesyl diphosphate: Arg306 and Tyr307.

Belongs to the terpene synthase family. Requires Mg(2+) as cofactor.

It carries out the reaction (2E,6E)-farnesyl diphosphate = Delta(6)-protoilludene + diphosphate. Delta(6)-protoilludene synthase, part of the gene cluster that mediates the biosynthesis of melleolides, a range of antifungal and phytotoxic polyketide derivatives composed of an orsellinic acid (OA) moiety esterified to various sesquiterpene alcohols. The first step in melleolides biosynthesis is performed by the delta(6)-protoilludene synthase PRO1 which catalyzes the cyclization of farnesyl diphosphate to protoilludene. The orsellinic acid synthase armB produces OA by condensing acetyl-CoA with 3 malonyl-CoA units in a three-round chain elongation reaction folowed by a C2-C7 ring closure. ArmB further catalyzes the trans-esterification of OA to the various sesquiterpene alcohols resulting from the hydroxylation of protoilludene. The melleolides cluster also includes 5 cytochrome P450 monooxygenases, 4 NAD(+)-dependent oxidoreductases, one flavin-dependent oxidoreductase, and one O-methyltransferase. The cytochrome P450 monooxygenases may be involved in protoilludene hydroxylation to elaborate melleolides with multiple alcohol groups, such as melleolide D, which carries alcohol functionalities at C-4, C-5, C-10, and C-13. The role of the NAD(+)-dependent enzymes remains unknown. Numerous melleolides, including arnamial, show 5'-O-methylation of the aromatic moiety which may be catalyzed by the methyltransferase encoded in the cluster. The flavin-dependent oxidoreductase might represent the dehydrogenase yielding the aldehyde in position 1 of arnamial and other melleolides. Finally, several halogenases, localized outside of the cluster, are able to catalyze the transfer of a single chlorine atom to the melleolide backbone, resulting in a 6'-chloromelleolide product. The protein is Delta(6)-protoilludene synthase of Armillaria ostoyae (Armillaria root rot fungus).